Consider the following 155-residue polypeptide: Large ribosomal subunit protein uL22c (155 aa).

The protein belongs to the universal ribosomal protein uL22 family. Part of the 50S ribosomal subunit.

It is found in the plastid. Its subcellular location is the chloroplast. Its function is as follows. This protein binds specifically to 23S rRNA. The globular domain of the protein is located near the polypeptide exit tunnel on the outside of the subunit, while an extended beta-hairpin is found that lines the wall of the exit tunnel in the center of the 70S ribosome. The chain is Large ribosomal subunit protein uL22c (rpl22) from Coffea arabica (Arabian coffee).